Reading from the N-terminus, the 1066-residue chain is Thyrotropin-releasing hormone-degrading ectoenzyme (1066 aa).

Residues 1–14 (MALDGERGEQEEEK) are compositionally biased toward basic and acidic residues. Positions 1 to 43 (MALDGERGEQEEEKKKKKKKKKRKKKEEEGAEKSSSPFAATMG) are disordered. Over 1-81 (MALDGERGEQ…ERHIAVHKRL (81 aa)) the chain is Cytoplasmic. Over residues 15–25 (KKKKKKKKRKK) the composition is skewed to basic residues. Residue T71 is modified to Phosphothreonine; by PKC. Residues 82–102 (VLAFAVSIVALLAVTMLAVLL) form a helical; Signal-anchor for type II membrane protein membrane-spanning segment. Topologically, residues 103 to 1066 (SLRFDECGAS…FQWLGKAMRH (964 aa)) are extracellular. The tract at residues 117–177 (GTDGGLGGFP…SEEEQEQWQP (61 aa)) is disordered. Residues 118–127 (TDGGLGGFPE) show a composition bias toward gly residues. An N-linked (GlcNAc...) asparagine glycan is attached at N131. Residues 143-154 (HAGEESSQREIG) are compositionally biased toward basic and acidic residues. 4 N-linked (GlcNAc...) asparagine glycosylation sites follow: N202, N217, N264, and N380. Position 446 to 450 (446 to 450 (AAMEN)) interacts with substrate. H482 lines the Zn(2+) pocket. The active-site Proton acceptor is the E483. Zn(2+)-binding residues include H486 and E505. N-linked (GlcNAc...) asparagine glycosylation is found at N647, N676, N691, N705, N726, N842, and N948.

It belongs to the peptidase M1 family. Homodimer; disulfide-linked. It depends on Zn(2+) as a cofactor. As to expression, predominantly expressed in brain and pituitary. Lower levels in lung and liver.

It is found in the membrane. The catalysed reaction is Release of the N-terminal pyroglutamyl group from pGlu-|-His-Xaa tripeptides and pGlu-|-His-Xaa-Gly tetrapeptides.. Specific inactivation of TRH after its release. This Rattus norvegicus (Rat) protein is Thyrotropin-releasing hormone-degrading ectoenzyme (Trhde).